A 236-amino-acid polypeptide reads, in one-letter code: Ribosomal RNA small subunit methyltransferase G (236 aa).

Residues G80, 131–132, and R148 each bind S-adenosyl-L-methionine; that span reads AE.

This sequence belongs to the methyltransferase superfamily. RNA methyltransferase RsmG family.

The protein resides in the cytoplasm. Functionally, specifically methylates the N7 position of a guanine in 16S rRNA. In Ureaplasma parvum serovar 3 (strain ATCC 27815 / 27 / NCTC 11736), this protein is Ribosomal RNA small subunit methyltransferase G.